A 522-amino-acid polypeptide reads, in one-letter code: ARS-binding protein 1 (522 aa).

The HTH CENPB-type domain occupies 70-144 (DVKRNRPPKY…RKRHILHAIN (75 aa)). At threonine 460 the chain carries Phosphothreonine.

Interacts with mcm10.

The protein resides in the nucleus. Binds, preferentially, to the Maundrell ARS consensus sequence within ARS3002. The protein is ARS-binding protein 1 (abp1) of Schizosaccharomyces pombe (strain 972 / ATCC 24843) (Fission yeast).